Reading from the N-terminus, the 384-residue chain is Cytochrome b (384 aa).

The next 4 helical transmembrane spans lie at 32–52 (FGFL…FLAI), 76–98 (WLLR…IHIS), 113–133 (TWVV…MGYV), and 179–199 (FFSF…VHMA). The heme b site is built by histidine 82 and histidine 96. Residues histidine 183 and histidine 197 each contribute to the heme b site. An a ubiquinone-binding site is contributed by histidine 202. 4 helical membrane-spanning segments follow: residues 225 to 245 (FIIK…LFVY), 289 to 309 (LGGV…PWIT), 321 to 341 (LYKK…WIGG), and 348 to 368 (YVVI…IFIP).

The protein belongs to the cytochrome b family. In terms of assembly, the main subunits of complex b-c1 are: cytochrome b, cytochrome c1 and the Rieske protein. Heme b serves as cofactor.

It localises to the mitochondrion inner membrane. Its function is as follows. Component of the ubiquinol-cytochrome c reductase complex (complex III or cytochrome b-c1 complex) that is part of the mitochondrial respiratory chain. The b-c1 complex mediates electron transfer from ubiquinol to cytochrome c. Contributes to the generation of a proton gradient across the mitochondrial membrane that is then used for ATP synthesis. The protein is Cytochrome b (MT-CYB) of Cyanidium caldarium (Red alga).